The following is a 79-amino-acid chain: Putative membrane protein insertion efficiency factor (79 aa).

Belongs to the UPF0161 family.

It localises to the cell inner membrane. Its function is as follows. Could be involved in insertion of integral membrane proteins into the membrane. In Prochlorococcus marinus (strain NATL2A), this protein is Putative membrane protein insertion efficiency factor.